We begin with the raw amino-acid sequence, 657 residues long: UvrABC system protein B (657 aa).

The Helicase ATP-binding domain occupies 24–409 (AGVRNQVKSQ…SGHIVQQIIR (386 aa)). Residue 37–44 (GTTGSGKT) participates in ATP binding. Positions 90–113 (YYDYYQPEAYIARSDTYIEKSLLI) match the Beta-hairpin motif. The 164-residue stretch at 426-589 (QVDDLLEEIR…IVPKPIIKAI (164 aa)) folds into the Helicase C-terminal domain. In terms of domain architecture, UVR spans 617-652 (EEQIKKYEALMQRAAKEFRFNEAAKYRDAMQACKEQ).

The protein belongs to the UvrB family. Forms a heterotetramer with UvrA during the search for lesions. Interacts with UvrC in an incision complex.

The protein localises to the cytoplasm. Functionally, the UvrABC repair system catalyzes the recognition and processing of DNA lesions. A damage recognition complex composed of 2 UvrA and 2 UvrB subunits scans DNA for abnormalities. Upon binding of the UvrA(2)B(2) complex to a putative damaged site, the DNA wraps around one UvrB monomer. DNA wrap is dependent on ATP binding by UvrB and probably causes local melting of the DNA helix, facilitating insertion of UvrB beta-hairpin between the DNA strands. Then UvrB probes one DNA strand for the presence of a lesion. If a lesion is found the UvrA subunits dissociate and the UvrB-DNA preincision complex is formed. This complex is subsequently bound by UvrC and the second UvrB is released. If no lesion is found, the DNA wraps around the other UvrB subunit that will check the other stand for damage. The protein is UvrABC system protein B of Chlamydia pneumoniae (Chlamydophila pneumoniae).